Here is a 375-residue protein sequence, read N- to C-terminus: G-protein coupled estrogen receptor 1 (375 aa).

Residue M1 is modified to N-acetylmethionine. Residues 1-62 are Extracellular-facing; sequence MDATTPAQTV…QQYVIALFLS (62 aa). N-linked (GlcNAc...) asparagine glycans are attached at residues N32 and N44. A helical membrane pass occupies residues 63-84; it reads CLYTIFLFPIGFVGNILILVVN. Over 85–96 the chain is Cytoplasmic; sequence ISFREKMTIPDL. A helical membrane pass occupies residues 97 to 120; it reads YFINLAAADLILVADSLIEVFNLD. The Extracellular portion of the chain corresponds to 121 to 132; the sequence is EQYYDIAVLCTF. Residues C130 and C207 are joined by a disulfide bond. A helical membrane pass occupies residues 133–153; sequence MSLFLQINMYSSVFFLTWMSF. Residues 154–175 lie on the Cytoplasmic side of the membrane; it reads DRYLALAKAMRCGLFRTKHHAR. A helical transmembrane segment spans residues 176 to 194; it reads LSCGLIWMASVSATLVPFT. Residues 195 to 220 are Extracellular-facing; that stretch reads AVHLRHTEEACFCFADVREVQWLEVT. Residues 221–236 form a helical membrane-spanning segment; sequence LGFIMPFAIIGLCYSL. At 237-259 the chain is on the cytoplasmic side; it reads IVRALIRAHRHRGLRPRRQKALR. The chain crosses the membrane as a helical span at residues 260–280; the sequence is MIFAVVLVFFICWLPENVFIS. Over 281–306 the chain is Extracellular; the sequence is VHLLQWTQPGDTPCKQSFRHAYPLTG. A helical transmembrane segment spans residues 307–327; the sequence is HIVNLAAFSNSCLNPLIYSFL. Topologically, residues 328 to 375 are cytoplasmic; the sequence is GETFRDKLRLYVEQKTSLPALNRFCHATLKAVIPDSTEQSEVRFSSAV.

The protein belongs to the G-protein coupled receptor 1 family. As to quaternary structure, interacts with RAMP3; the interaction confers proper subcellular localization and function in cardioprotection. Interacts with KRT7 and KRT8. Interacts with EGFR; the interaction increases after agonist-induced stimulation in cancer-associated fibroblasts (CAF). Interacts with EGFR and ESR1. Interacts (via C-terminus tail motif) with DLG4 (via N-terminus tandem pair of PDZ domains); the interaction is direct and induces the increase of GPER1 protein levels residing at the plasma membrane surface in a estradiol-independent manner. Homodimer. Heterodimer; heterodimerizes with other G-protein-coupled receptor (GPCRs) like CRHR1, HTR1A and PAQR8. Ubiquitinated; ubiquitination occurs at the plasma membrane and leads to proteasome-mediated degradation. Post-translationally, N-glycosylated. In terms of tissue distribution, expressed in brain, heart, spleen, preadipocytes, mature adipocytes and primary hippocampal neurons. Expressed in neurons of the hippocampus, hypothalamic paraventricular nucleus (PVH), supraoptic nucleus (SON) and the median eminence. Expressed in the nucleus ambiguous (at protein level). Expressed in brain, pituitary gland, adrenal medulla, renal pelvis, ovary, endothelial cells, visceral fat tissues and islets of Langerhans.

The protein localises to the nucleus. The protein resides in the cytoplasm. It localises to the perinuclear region. Its subcellular location is the cytoskeleton. It is found in the cell membrane. The protein localises to the endoplasmic reticulum membrane. The protein resides in the golgi apparatus membrane. It localises to the cell projection. Its subcellular location is the dendrite. It is found in the cytoplasmic vesicle membrane. The protein localises to the early endosome. The protein resides in the recycling endosome. It localises to the golgi apparatus. Its subcellular location is the trans-Golgi network. It is found in the dendritic spine membrane. The protein localises to the axon. The protein resides in the postsynaptic density. It localises to the mitochondrion membrane. Its function is as follows. G-protein coupled estrogen receptor that binds to 17-beta-estradiol (E2) with high affinity, leading to rapid and transient activation of numerous intracellular signaling pathways. Stimulates cAMP production, calcium mobilization and tyrosine kinase Src inducing the release of heparin-bound epidermal growth factor (HB-EGF) and subsequent transactivation of the epidermal growth factor receptor (EGFR), activating downstream signaling pathways such as PI3K/Akt and ERK/MAPK. Mediates pleiotropic functions among others in the cardiovascular, endocrine, reproductive, immune and central nervous systems. Has a role in cardioprotection by reducing cardiac hypertrophy and perivascular fibrosis in a RAMP3-dependent manner. Regulates arterial blood pressure by stimulating vasodilation and reducing vascular smooth muscle and microvascular endothelial cell proliferation. Plays a role in blood glucose homeostasis contributing to the insulin secretion response by pancreatic beta cells. Triggers mitochondrial apoptosis during pachytene spermatocyte differentiation. Stimulates uterine epithelial cell proliferation. Enhances uterine contractility in response to oxytocin. Contributes to thymic atrophy by inducing apoptosis. Attenuates TNF-mediated endothelial expression of leukocyte adhesion molecules. Promotes neuritogenesis in developing hippocampal neurons. Plays a role in acute neuroprotection against NMDA-induced excitotoxic neuronal death. Increases firing activity and intracellular calcium oscillations in luteinizing hormone-releasing hormone (LHRH) neurons. Inhibits early osteoblast proliferation at growth plate during skeletal development. Inhibits mature adipocyte differentiation and lipid accumulation. Involved in the recruitment of beta-arrestin 2 ARRB2 at the plasma membrane in epithelial cells. Also functions as a receptor for aldosterone mediating rapid regulation of vascular contractibility through the PI3K/ERK signaling pathway. Involved in cancer progression regulation. Stimulates cancer-associated fibroblast (CAF) proliferation by a rapid genomic response through the EGFR/ERK transduction pathway. Associated with EGFR, may act as a transcription factor activating growth regulatory genes (c-fos, cyclin D1). Promotes integrin alpha-5/beta-1 and fibronectin (FN) matrix assembly in breast cancer cells. In Mus musculus (Mouse), this protein is G-protein coupled estrogen receptor 1 (Gper1).